A 455-amino-acid chain; its full sequence is Elongation factor Tu, mitochondrial (455 aa).

The N-terminal 46 residues, 1-46 (MTTMAAATLLRATPHFSGLAAGRTFLLQGLLRLLKAPALPLLCRGL), are a transit peptide targeting the mitochondrion. The 197-residue stretch at 58–254 (KPHVNVGTIG…AVDTYIPVPA (197 aa)) folds into the tr-type G domain. The segment at 67–74 (GHVDHGKT) is G1. Residues aspartate 70, glycine 72, lysine 73, threonine 74, and threonine 75 each contribute to the GTP site. Position 74 (threonine 74) interacts with Mg(2+). Lysine 82 bears the N6-acetyllysine mark. Lysine 91 carries the post-translational modification N6-acetyllysine; alternate. Lysine 91 bears the N6-succinyllysine; alternate mark. A G2 region spans residues 108–112 (GITIN). The segment at 129–132 (DCPG) is G3. Residues asparagine 184, aspartate 187, serine 222, alanine 223, and leucine 224 each contribute to the GTP site. A G4 region spans residues 184 to 187 (NKAD). The tract at residues 222 to 224 (SAL) is G5. Lysine 237 is subject to N6-succinyllysine. Lysine 259 is subject to N6-acetyllysine. Threonine 281 is modified (phosphothreonine). Lysine 289 carries the post-translational modification N6-succinyllysine. A Phosphoserine modification is found at serine 315. 2 positions are modified to N6-acetyllysine: lysine 364 and lysine 421.

The protein belongs to the TRAFAC class translation factor GTPase superfamily. Classic translation factor GTPase family. EF-Tu/EF-1A subfamily. In terms of assembly, interacts with NLRX1. Interacts with ATG16L1. As to quaternary structure, (Microbial infection) Interacts with human parainfluenza virus 3 matrix protein; this interaction inhibits RLR-mediated type I interferon production while promoting autophagy. (Microbial infection) Interacts with Hantaan hantavirus glycoprotein N; this interaction contributes to the virus-induced degradation of mitochondria by autophagy, which leads to degradation of MAVS and inhibition of type I interferon (IFN) responses.

It localises to the mitochondrion. It carries out the reaction GTP + H2O = GDP + phosphate + H(+). Its function is as follows. GTP hydrolase that promotes the GTP-dependent binding of aminoacyl-tRNA to the A-site of ribosomes during protein biosynthesis. Also plays a role in the regulation of autophagy and innate immunity. Recruits ATG5-ATG12 and NLRX1 at mitochondria and serves as a checkpoint of the RIGI-MAVS pathway. In turn, inhibits RLR-mediated type I interferon while promoting autophagy. The chain is Elongation factor Tu, mitochondrial (TUFM) from Homo sapiens (Human).